Reading from the N-terminus, the 235-residue chain is Ubiquinone biosynthesis O-methyltransferase (235 aa).

Residues R39, G59, D80, and M124 each contribute to the S-adenosyl-L-methionine site.

This sequence belongs to the methyltransferase superfamily. UbiG/COQ3 family.

The enzyme catalyses a 3-demethylubiquinol + S-adenosyl-L-methionine = a ubiquinol + S-adenosyl-L-homocysteine + H(+). It carries out the reaction a 3-(all-trans-polyprenyl)benzene-1,2-diol + S-adenosyl-L-methionine = a 2-methoxy-6-(all-trans-polyprenyl)phenol + S-adenosyl-L-homocysteine + H(+). It participates in cofactor biosynthesis; ubiquinone biosynthesis. In terms of biological role, O-methyltransferase that catalyzes the 2 O-methylation steps in the ubiquinone biosynthetic pathway. The protein is Ubiquinone biosynthesis O-methyltransferase of Vibrio vulnificus (strain CMCP6).